The chain runs to 1030 residues: Halotolerance protein 9 (1030 aa).

A DNA-binding region (zn(2)-C6 fungal-type) is located at residues 136-166 (CDHCRKRKIRCDEVDQQTKKCSNCIKFQLPC). A disordered region spans residues 185–208 (HHATPGESLQTSNSISNPVASSSV). The segment covering 196–208 (SNSISNPVASSSV) has biased composition (low complexity). S221 and S937 each carry phosphoserine.

The protein localises to the cytoplasm. It localises to the nucleus. Functionally, putative transcription factor involved in halotolerance. This Saccharomyces cerevisiae (strain ATCC 204508 / S288c) (Baker's yeast) protein is Halotolerance protein 9 (HAL9).